Reading from the N-terminus, the 243-residue chain is CAVP-target protein (243 aa).

The disordered stretch occupies residues 1–22 (PKPPAEAKPAAKPAAPPAAANP). The span at 7-20 (AKPAAKPAAPPAAA) shows a compositional bias: low complexity. Positions 35–62 (SAATRIQASFRMHKNRMALKEKSIPKFS) constitute an IQ domain. Ig-like C2-type domains lie at 59–150 (PKFS…LALE) and 151–243 (VPAK…VKVN).

Functionally, this protein is the target of CAVP, which binds to it in a calcium-dependent manner. This is CAVP-target protein from Branchiostoma lanceolatum (Common lancelet).